The chain runs to 459 residues: Protein king tubby (459 aa).

The segment at 114 to 205 (HELEDEESSP…SNGAGGESEG (92 aa)) is disordered. A compositionally biased stretch (polar residues) spans 123-155 (PVTVIEQQQTAPHSANSTHSQRPSTTRQPSFND). Ser-152 is subject to Phosphoserine.

This sequence belongs to the TUB family.

The protein resides in the cytoplasm. It localises to the nucleus. Its subcellular location is the cell projection. The protein localises to the cilium membrane. It is found in the rhabdomere. The polypeptide is Protein king tubby (Drosophila persimilis (Fruit fly)).